We begin with the raw amino-acid sequence, 711 residues long: Polyribonucleotide nucleotidyltransferase (711 aa).

Positions 486 and 492 each coordinate Mg(2+). Residues 553-612 (PRIHTIKISTDKIKDVIGKGGSVIRALTEETGTTIEIEDDGTVKIAATDGEKAKYAIRRI) form the KH domain. An S1 motif domain is found at 622-690 (GRIYNGKVTR…RQGRVRLSIK (69 aa)). Positions 689–711 (IKEATEQTQPAAAPEAPTSEQGE) are disordered. A compositionally biased stretch (low complexity) spans 694-711 (EQTQPAAAPEAPTSEQGE).

It belongs to the polyribonucleotide nucleotidyltransferase family. In terms of assembly, component of the RNA degradosome, which is a multiprotein complex involved in RNA processing and mRNA degradation. It depends on Mg(2+) as a cofactor.

The protein localises to the cytoplasm. It carries out the reaction RNA(n+1) + phosphate = RNA(n) + a ribonucleoside 5'-diphosphate. Its function is as follows. Involved in mRNA degradation. Catalyzes the phosphorolysis of single-stranded polyribonucleotides processively in the 3'- to 5'-direction. This is Polyribonucleotide nucleotidyltransferase from Salmonella arizonae (strain ATCC BAA-731 / CDC346-86 / RSK2980).